The chain runs to 110 residues: UPF0122 protein SPG_1182 (110 aa).

This sequence belongs to the UPF0122 family.

Might take part in the signal recognition particle (SRP) pathway. This is inferred from the conservation of its genetic proximity to ftsY/ffh. May be a regulatory protein. This Streptococcus pneumoniae serotype 19F (strain G54) protein is UPF0122 protein SPG_1182.